The following is a 129-amino-acid chain: Lysozyme C (129 aa).

One can recognise a C-type lysozyme domain in the interval 1–129; it reads KVYGRCELAA…VNAWIRGCRL (129 aa). Intrachain disulfides connect Cys-6–Cys-127, Cys-30–Cys-115, Cys-64–Cys-80, and Cys-76–Cys-94. Catalysis depends on residues Glu-35 and Asp-52.

It belongs to the glycosyl hydrolase 22 family. In terms of assembly, monomer.

The protein resides in the secreted. The enzyme catalyses Hydrolysis of (1-&gt;4)-beta-linkages between N-acetylmuramic acid and N-acetyl-D-glucosamine residues in a peptidoglycan and between N-acetyl-D-glucosamine residues in chitodextrins.. In terms of biological role, lysozymes have primarily a bacteriolytic function; those in tissues and body fluids are associated with the monocyte-macrophage system and enhance the activity of immunoagents. The protein is Lysozyme C (LYZ) of Syrmaticus reevesii (Reeves's pheasant).